The chain runs to 94 residues: Acylphosphatase (94 aa).

Positions 8 to 94 (RFTARVVGRV…QGDLADFRRK (87 aa)) constitute an Acylphosphatase-like domain. Active-site residues include Arg-23 and Asn-41.

Belongs to the acylphosphatase family.

It catalyses the reaction an acyl phosphate + H2O = a carboxylate + phosphate + H(+). This Frankia alni (strain DSM 45986 / CECT 9034 / ACN14a) protein is Acylphosphatase (acyP).